A 172-amino-acid polypeptide reads, in one-letter code: RTX-I toxin-activating lysine-acyltransferase ApxIC (172 aa).

Catalysis depends on residues H24 and D93.

Belongs to the RTX toxin acyltransferase family. As to quaternary structure, homodimer.

It localises to the cytoplasm. It carries out the reaction a fatty acyl-[ACP] + L-lysyl-[protein] = N(6)-(fatty acyl)-L-lysyl-[protein] + holo-[ACP] + H(+). Functionally, protein-lysine acyltransferase that catalyzes fatty acylation of the protoxin, thereby converting it to the active toxin. This is RTX-I toxin-activating lysine-acyltransferase ApxIC from Actinobacillus pleuropneumoniae (Haemophilus pleuropneumoniae).